The following is a 540-amino-acid chain: MSAKDVKFHDSARSRIVKGVNVLADAVKVTLGPKGRNVLIERSFGAPTITKDGVSVAKEIELKDRFENMGAQVVKQVASKTADVAGDGTTTATVLAQSIVQEGMKHVAAGMNPMDLKRGIDKAVAAVLDELHRLSKPIKTSREIAQVGAISANADEAIGKIIADAMDKVGKEGVITVEDGKSLENELEVVEGMQFDRGYLSPYFINDPDKQVAHLDDPLILLHDKKISSIRDLLPVLEAAAKAGKPLLIIAEDVEGEALTTLVVNSMRGVLKVAAVKAPGFGDRRKALLEDIAILTGATVISEETGKQLEKATLEELGRAKRVEVQKENTIIIDGAGDQTRIDARVKAIRAQIEEATSDYDREKLQERVAKLAGGVAVIKVGAATEVEMKEKKDRVDDALHATRAAVEEGIVPGGGVALLRARSAISSLTGANADQDAGIRIVLRALEAPLRVIAANAGDEPSVVVAKVLSGKGNYGYNAATGEYGDLVETGVVDPTKVTRTALQNAASIAGLILTTDATVAEAPKEEKAVPAPAPELEY.

ATP-binding positions include 30-33 (TLGP), K51, 87-91 (DGTTT), G415, 479-481 (NAA), and D495.

It belongs to the chaperonin (HSP60) family. In terms of assembly, forms a cylinder of 14 subunits composed of two heptameric rings stacked back-to-back. Interacts with the co-chaperonin GroES.

The protein resides in the cytoplasm. The catalysed reaction is ATP + H2O + a folded polypeptide = ADP + phosphate + an unfolded polypeptide.. Functionally, together with its co-chaperonin GroES, plays an essential role in assisting protein folding. The GroEL-GroES system forms a nano-cage that allows encapsulation of the non-native substrate proteins and provides a physical environment optimized to promote and accelerate protein folding. The polypeptide is Chaperonin GroEL 2/3 (Paraburkholderia xenovorans (strain LB400)).